The chain runs to 488 residues: Dipeptide and tripeptide permease A (488 aa).

At 1-35 (MSTANTPEDEQKPSLNAFKQPRAFYLIFSIELWER) the chain is on the cytoplasmic side. Residues 36-56 (FGYYGLQGIMAVYLVKMLGMS) traverse the membrane as a helical segment. Over 57–60 (EAEA) the chain is Periplasmic. Residues 61–81 (ITVFAAFTALVYGFVAIGGWL) traverse the membrane as a helical segment. At 82–90 (GDKILGTKR) the chain is on the cytoplasmic side. A helical membrane pass occupies residues 91–111 (VIVLGAIVLAIGYAMVAFSDH). The Periplasmic segment spans residues 112 to 114 (DKD). A helical membrane pass occupies residues 115–135 (MIYWGLATIAVGNGLFKANPS). Residues 136–154 (SLLATCYEKDDPQLDGAFT) are Cytoplasmic-facing. A helical membrane pass occupies residues 155-175 (MYYMSINVGSFLSMLATPWLA). Over 176–179 (ANYG) the chain is Periplasmic. Residues 180-200 (WDVAFALSVVGMLITLANFML) traverse the membrane as a helical segment. Over 201-219 (CRGWIKDKGSRPDFEPLNY) the chain is Cytoplasmic. A helical transmembrane segment spans residues 220–240 (LKLLLTLVGIVALTAVSTWLL). A topological domain (periplasmic) is located at residue His-241. The chain crosses the membrane as a helical span at residues 242 to 262 (NNEVATWSLAIISLGIILIFA). Topologically, residues 263-275 (RETFMMKGVARRK) are cytoplasmic. Residues 276 to 296 (MIVAFLLMVEAVVFFVLYDQM) form a helical membrane-spanning segment. The Periplasmic segment spans residues 297–324 (PTSLNFFAIHNVEHAILGFSVEPEQFQS). The helical transmembrane segment at 325–345 (LNPFWIMLASPLLAAIYNFMG) threads the bilayer. Topologically, residues 346–353 (DKLPMPYK) are cytoplasmic. Residues 354-374 (FTVGMFLSATAFLVLPLGASM) traverse the membrane as a helical segment. Residues 375–391 (ANEAGIVSSWWLVASYG) lie on the Periplasmic side of the membrane. The chain crosses the membrane as a helical span at residues 392-412 (FQSIGELMISGLGLAMVAQLV). Residues 413–415 (PQR) are Cytoplasmic-facing. Residues 416 to 436 (LMGFIMGAWFLTSAAAAIIAG) form a helical membrane-spanning segment. At 437–460 (KVASLMAVPEDVQNAHASLEIYSS) the chain is on the periplasmic side. Residues 461 to 481 (VFLQIGIVTGVIALLMLFTAP) traverse the membrane as a helical segment. Residues 482 to 488 (MLSKMTQ) are Cytoplasmic-facing.

The protein belongs to the major facilitator superfamily. Proton-dependent oligopeptide transporter (POT/PTR) (TC 2.A.17) family. DtpA subfamily.

It is found in the cell inner membrane. Functionally, proton-dependent permease that transports di- and tripeptides. This chain is Dipeptide and tripeptide permease A, found in Proteus mirabilis (strain HI4320).